The chain runs to 178 residues: Cell wall-binding protein YwsB (178 aa).

The signal sequence occupies residues 1 to 30 (MNKPTKLFSTLALAAGMTAAAAGGAGTIHA). SH3b domains follow at residues 47 to 111 (IDSY…VKAA) and 116 to 178 (TKTK…HMTK).

It localises to the secreted. It is found in the cell wall. Increases in stationary phase in a strain lacking the WprA protease. In Bacillus subtilis (strain 168), this protein is Cell wall-binding protein YwsB (ywsB).